The primary structure comprises 238 residues: Ribonuclease 3 (238 aa).

In terms of domain architecture, RNase III spans 4–134 (PRQALLDAFG…LLGAIYLHHG (131 aa)). Residue glutamate 44 participates in Mg(2+) binding. Aspartate 48 is an active-site residue. Mg(2+) is bound by residues aspartate 120 and glutamate 123. Residue glutamate 123 is part of the active site. The region spanning 161 to 229 (DWKTSLQELT…ASAAWKALDV (69 aa)) is the DRBM domain.

Belongs to the ribonuclease III family. Homodimer. Mg(2+) serves as cofactor.

The protein resides in the cytoplasm. The catalysed reaction is Endonucleolytic cleavage to 5'-phosphomonoester.. Functionally, digests double-stranded RNA. Involved in the processing of primary rRNA transcript to yield the immediate precursors to the large and small rRNAs (23S and 16S). Processes some mRNAs, and tRNAs when they are encoded in the rRNA operon. Processes pre-crRNA and tracrRNA of type II CRISPR loci if present in the organism. The polypeptide is Ribonuclease 3 (Mycobacterium leprae (strain TN)).